The primary structure comprises 281 residues: Transcription factor HES-1 (281 aa).

The interval 1–44 (MPADIMEKNSSSPVAATPASVNTTPDKPKTASEHRKSSKPIMEK) is disordered. The segment covering 10-21 (SSSPVAATPASV) has biased composition (low complexity). Residues 26 to 35 (DKPKTASEHR) show a composition bias toward basic and acidic residues. Residues 34 to 91 (HRKSSKPIMEKRRRARINESLSQLKTLILDALKKDSSRHSKLEKADILEMTVKHLRNL) enclose the bHLH domain. The Orange domain maps to 110 to 143 (YRAGFSECMNEVTRFLSTCEGVNTEVRTRLLGHL). Disordered regions lie at residues 158–206 (QAHP…PCKL) and 255–281 (TSVGPNAVSPSSGSSLTADSMWRPWRN). 2 stretches are compositionally biased toward pro residues: residues 164–174 (QAPPPPPPSGP) and 182–201 (FAPPPPLVPIPGGAAPPPGS). Polar residues predominate over residues 255-272 (TSVGPNAVSPSSGSSLTA). The WRPW motif motif lies at 276–279 (WRPW).

As to quaternary structure, interacts with SIRT1. Interacts weakly with TLE2. Interacts with HES6. Transcription repression requires formation of a complex with a corepressor protein of the Groucho/TLE family. Interacts (via WPRW motif) with TLE1. Interacts with an FA complex, composed of FANCA, FANCF, FANCG and FANCL, but not of FANCC, nor FANCE. Present in all tissues examined but highest in epithelial cells and in mesoderm-derived tissues such as embryonal muscle cells.

It is found in the nucleus. Transcriptional repressor of genes that require a bHLH protein for their transcription. May act as a negative regulator of myogenesis by inhibiting the functions of MYOD1 and ASH1. Binds DNA on N-box motifs: 5'-CACNAG-3' with high affinity and on E-box motifs: 5'-CANNTG-3' with low affinity. May play a role in a functional FA core complex response to DNA cross-link damage, being required for the stability and nuclear localization of FA core complex proteins, as well as for FANCD2 monoubiquitination in response to DNA damage. The polypeptide is Transcription factor HES-1 (Hes1) (Rattus norvegicus (Rat)).